Here is a 527-residue protein sequence, read N- to C-terminus: Monooxygenase aurF (527 aa).

The signal sequence occupies residues 1 to 19 (MPNPTVAIVGLGALGLVTL). Residue asparagine 59 is glycosylated (N-linked (GlcNAc...) asparagine).

It belongs to the FMO family. In terms of assembly, might be part of an extracellular enzyme complex composed of GIP1, aurF, aurO and aurS. The cofactor is FAD.

The protein resides in the secreted. The protein localises to the extracellular space. It functions in the pathway pigment biosynthesis. Functionally, monooxygenase; part of the gene cluster that mediates the biosynthesis of aurofusarin, a red mycelium pigment which is acting as a mycotoxin. The first step is performed by the polyketide synthase which condenses one acetyl-CoA and 6 malonyl-CoA units to form the first intermediate, the cyclic heptaketide and yellow pigment YWA1. The C2 hydroxyl group in the pyrone ring of YWA1 is probably formed during ring closure by an aldol-type cyclization reaction. The dehydratase aurZ then acts as the first tailoring enzyme in the aurofusarin biosynthetic pathway by converting YWA1 to nor-rubrofusarin. Nor-rubrofusarin is then methylated to rubrofusarin by the O-methyltransferase aurJ. Rubrofusarin is then transported across the plasma membrane by the rubrofusarin-specific pump aurT for further enzymatic processing by the extracellular complex composed of GIP1, aurF, aurO and aurS to yield aurofusarin. In Gibberella zeae (strain ATCC MYA-4620 / CBS 123657 / FGSC 9075 / NRRL 31084 / PH-1) (Wheat head blight fungus), this protein is Monooxygenase aurF.